Here is a 119-residue protein sequence, read N- to C-terminus: Large ribosomal subunit protein uL22 (119 aa).

This sequence belongs to the universal ribosomal protein uL22 family. In terms of assembly, part of the 50S ribosomal subunit.

Functionally, this protein binds specifically to 23S rRNA; its binding is stimulated by other ribosomal proteins, e.g. L4, L17, and L20. It is important during the early stages of 50S assembly. It makes multiple contacts with different domains of the 23S rRNA in the assembled 50S subunit and ribosome. In terms of biological role, the globular domain of the protein is located near the polypeptide exit tunnel on the outside of the subunit, while an extended beta-hairpin is found that lines the wall of the exit tunnel in the center of the 70S ribosome. In Pelodictyon phaeoclathratiforme (strain DSM 5477 / BU-1), this protein is Large ribosomal subunit protein uL22.